A 378-amino-acid polypeptide reads, in one-letter code: Anhydro-N-acetylmuramic acid kinase (378 aa).

9 to 16 (GTSADGID) lines the ATP pocket.

The protein belongs to the anhydro-N-acetylmuramic acid kinase family.

It carries out the reaction 1,6-anhydro-N-acetyl-beta-muramate + ATP + H2O = N-acetyl-D-muramate 6-phosphate + ADP + H(+). The protein operates within amino-sugar metabolism; 1,6-anhydro-N-acetylmuramate degradation. Its pathway is cell wall biogenesis; peptidoglycan recycling. In terms of biological role, catalyzes the specific phosphorylation of 1,6-anhydro-N-acetylmuramic acid (anhMurNAc) with the simultaneous cleavage of the 1,6-anhydro ring, generating MurNAc-6-P. Is required for the utilization of anhMurNAc either imported from the medium or derived from its own cell wall murein, and thus plays a role in cell wall recycling. This Synechococcus elongatus (strain ATCC 33912 / PCC 7942 / FACHB-805) (Anacystis nidulans R2) protein is Anhydro-N-acetylmuramic acid kinase.